Here is a 245-residue protein sequence, read N- to C-terminus: 1-(5-phosphoribosyl)-5-[(5-phosphoribosylamino)methylideneamino] imidazole-4-carboxamide isomerase (245 aa).

Residue D8 is the Proton acceptor of the active site. The active-site Proton donor is D130.

The protein belongs to the HisA/HisF family.

Its subcellular location is the cytoplasm. The enzyme catalyses 1-(5-phospho-beta-D-ribosyl)-5-[(5-phospho-beta-D-ribosylamino)methylideneamino]imidazole-4-carboxamide = 5-[(5-phospho-1-deoxy-D-ribulos-1-ylimino)methylamino]-1-(5-phospho-beta-D-ribosyl)imidazole-4-carboxamide. The protein operates within amino-acid biosynthesis; L-histidine biosynthesis; L-histidine from 5-phospho-alpha-D-ribose 1-diphosphate: step 4/9. In Pseudomonas fluorescens (strain Pf0-1), this protein is 1-(5-phosphoribosyl)-5-[(5-phosphoribosylamino)methylideneamino] imidazole-4-carboxamide isomerase.